Consider the following 436-residue polypeptide: Cyclin-A2-2 (436 aa).

It belongs to the cyclin family. Cyclin AB subfamily. Expressed in roots, stems, leaves, flowers and siliques.

This chain is Cyclin-A2-2 (CYCA2-2), found in Arabidopsis thaliana (Mouse-ear cress).